Reading from the N-terminus, the 323-residue chain is Formyl peptide receptor-related sequence 4 (323 aa).

The Extracellular segment spans residues methionine 1 to serine 29. 2 N-linked (GlcNAc...) asparagine glycosylation sites follow: asparagine 4 and asparagine 10. The chain crosses the membrane as a helical span at residues leucine 30–valine 50. The Cytoplasmic segment spans residues alanine 51–asparagine 66. A helical membrane pass occupies residues leucine 67 to methionine 87. The Extracellular segment spans residues arginine 88–lysine 99. A disulfide bond links cysteine 98 and cysteine 176. The helical transmembrane segment at leucine 100–alanine 120 threads the bilayer. Residues methionine 121–lysine 144 are Cytoplasmic-facing. The helical transmembrane segment at valine 145–threonine 165 threads the bilayer. The Extracellular portion of the chain corresponds to threonine 166–glycine 202. Residues isoleucine 203–leucine 223 form a helical membrane-spanning segment. The Cytoplasmic segment spans residues methionine 224–arginine 241. A helical transmembrane segment spans residues valine 242–leucine 262. Over leucine 263–asparagine 280 the chain is Extracellular. Asparagine 269 carries N-linked (GlcNAc...) asparagine glycosylation. Residues proline 281 to glycine 301 traverse the membrane as a helical segment. Residues glutamine 302–aspartate 323 are Cytoplasmic-facing.

This sequence belongs to the G-protein coupled receptor 1 family. As to expression, expressed in 0.6 % of a subset of sensory neurons located in the apical layer of the vomeronasal organ. Each neuron appears to express only one receptor gene.

The protein resides in the cell membrane. Functionally, may have an olfactory function associated with the identification of pathogens or of pathogenic states. This chain is Formyl peptide receptor-related sequence 4 (Fpr-rs4), found in Mus musculus (Mouse).